Reading from the N-terminus, the 412-residue chain is Carboxypeptidase B1 (412 aa).

The first 18 residues, 1–18 (MIPRIVVVLLSVLAVVTA), serve as a signal peptide directing secretion. A propeptide spans 19–75 (RRSYEGYKVYGIVPESPDEAEILYQIRQSNPDLDFWHLTKQPGDEARVLVAPKDQRS) (activation peptide). Residues 118-408 (SYLRHNEINE…VGIKAMALKV (291 aa)) form the Peptidase M14 domain. Residues His-175 and Glu-178 each contribute to the Zn(2+) site. Residue 175–178 (HARE) coordinates a peptide. Asn-205 is a glycosylation site (N-linked (GlcNAc...) asparagine). Residues Arg-230 and 246 to 247 (NR) contribute to the a peptide site. Cys-240 and Cys-263 are disulfide-bonded. His-299 provides a ligand contact to Zn(2+). A peptide-binding positions include 300 to 301 (SY) and Tyr-351. The active-site Proton donor/acceptor is Glu-374. Asn-395 is a glycosylation site (N-linked (GlcNAc...) asparagine).

This sequence belongs to the peptidase M14 family. As to quaternary structure, monomer. Interacts with Dengue virus type 2 (DENV2, MY89-88549 strain) envelope protein E. Interacts with Dengue virus envelope protein E type 3, type 2, type 4 and type 1 with decreasing strength. Zn(2+) is required as a cofactor. In terms of tissue distribution, expressed in midgut (at protein level).

Its subcellular location is the endoplasmic reticulum. It carries out the reaction Preferential release of a C-terminal lysine or arginine amino acid.. Its activity is regulated as follows. Inhibited by S.tuberosum metallocarboxypeptidase inhibitor. In terms of biological role, carboxypeptidase that preferentially hydrolyzes arginine and lysine residues at the C-terminus. During infection by dengue virus, may play a role in preventing viral packaging, maturation, and release from the midgut. This Aedes aegypti (Yellowfever mosquito) protein is Carboxypeptidase B1.